The sequence spans 188 residues: Protein SSX4 (188 aa).

Residues 20–83 enclose the KRAB-related domain; it reads KLRKAFDDIA…KRAADFHGND (64 aa). The segment covering 116-127 has biased composition (basic and acidic residues); that stretch reads PAEEENGLKEVP. A disordered region spans residues 116–167; sequence PAEEENGLKEVPEASGPQNDGKQLCPPGNPSTLEKINKTSGPKRGKHAWTHR. Residues 145–155 are compositionally biased toward polar residues; sequence PSTLEKINKTS. Residues 156–167 are compositionally biased toward basic residues; the sequence is GPKRGKHAWTHR.

The protein belongs to the SSX family.

In terms of biological role, could act as a modulator of transcription. In Homo sapiens (Human), this protein is Protein SSX4 (SSX4).